The sequence spans 286 residues: Bifunctional protein FolD (286 aa).

NADP(+) is bound by residues 170–172 and isoleucine 236; that span reads GHS.

It belongs to the tetrahydrofolate dehydrogenase/cyclohydrolase family. As to quaternary structure, homodimer.

It carries out the reaction (6R)-5,10-methylene-5,6,7,8-tetrahydrofolate + NADP(+) = (6R)-5,10-methenyltetrahydrofolate + NADPH. The enzyme catalyses (6R)-5,10-methenyltetrahydrofolate + H2O = (6R)-10-formyltetrahydrofolate + H(+). It participates in one-carbon metabolism; tetrahydrofolate interconversion. Functionally, catalyzes the oxidation of 5,10-methylenetetrahydrofolate to 5,10-methenyltetrahydrofolate and then the hydrolysis of 5,10-methenyltetrahydrofolate to 10-formyltetrahydrofolate. This is Bifunctional protein FolD from Methanococcoides burtonii (strain DSM 6242 / NBRC 107633 / OCM 468 / ACE-M).